A 259-amino-acid chain; its full sequence is 3-oxo-5-alpha-steroid 4-dehydrogenase 1 (259 aa).

The next 5 helical transmembrane spans lie at L12–A29, I86–M106, P111–Q131, F151–I171, and Y209–L229.

Belongs to the steroid 5-alpha reductase family. As to expression, liver and prostate (at a low level).

It localises to the microsome membrane. The protein localises to the endoplasmic reticulum membrane. It catalyses the reaction a 3-oxo-5alpha-steroid + NADP(+) = a 3-oxo-Delta(4)-steroid + NADPH + H(+). It carries out the reaction androst-4-ene-3,17-dione + NADPH + H(+) = 5alpha-androstan-3,17-dione + NADP(+). The catalysed reaction is 5alpha-pregnane-3,20-dione + NADP(+) = progesterone + NADPH + H(+). The enzyme catalyses 17beta-hydroxy-5alpha-androstan-3-one + NADP(+) = testosterone + NADPH + H(+). In terms of biological role, converts testosterone into 5-alpha-dihydrotestosterone and progesterone or corticosterone into their corresponding 5-alpha-3-oxosteroids. It plays a central role in sexual differentiation and androgen physiology. The sequence is that of 3-oxo-5-alpha-steroid 4-dehydrogenase 1 from Homo sapiens (Human).